A 313-amino-acid polypeptide reads, in one-letter code: tRNA dimethylallyltransferase (313 aa).

11 to 18 (GPTAGGKT) is a binding site for ATP. 13–18 (TAGGKT) provides a ligand contact to substrate. Interaction with substrate tRNA regions lie at residues 36–39 (DSAL), 160–164 (QRIGR), and 243–248 (RCVGYR).

This sequence belongs to the IPP transferase family. As to quaternary structure, monomer. Mg(2+) is required as a cofactor.

It catalyses the reaction adenosine(37) in tRNA + dimethylallyl diphosphate = N(6)-dimethylallyladenosine(37) in tRNA + diphosphate. In terms of biological role, catalyzes the transfer of a dimethylallyl group onto the adenine at position 37 in tRNAs that read codons beginning with uridine, leading to the formation of N6-(dimethylallyl)adenosine (i(6)A). This is tRNA dimethylallyltransferase from Neisseria meningitidis serogroup A / serotype 4A (strain DSM 15465 / Z2491).